The following is a 325-amino-acid chain: Ferrochelatase (325 aa).

Residues His172 and Glu267 each coordinate Fe cation.

This sequence belongs to the ferrochelatase family.

Its subcellular location is the cytoplasm. It carries out the reaction heme b + 2 H(+) = protoporphyrin IX + Fe(2+). It participates in porphyrin-containing compound metabolism; protoheme biosynthesis; protoheme from protoporphyrin-IX: step 1/1. Catalyzes the ferrous insertion into protoporphyrin IX. The protein is Ferrochelatase of Acidobacterium capsulatum (strain ATCC 51196 / DSM 11244 / BCRC 80197 / JCM 7670 / NBRC 15755 / NCIMB 13165 / 161).